The primary structure comprises 363 residues: Flagellar P-ring protein (363 aa).

The N-terminal stretch at 1–20 (MKIKLILACALMVFSAASSA) is a signal peptide.

It belongs to the FlgI family. In terms of assembly, the basal body constitutes a major portion of the flagellar organelle and consists of four rings (L,P,S, and M) mounted on a central rod.

The protein resides in the periplasm. It is found in the bacterial flagellum basal body. Functionally, assembles around the rod to form the L-ring and probably protects the motor/basal body from shearing forces during rotation. The polypeptide is Flagellar P-ring protein (Shewanella loihica (strain ATCC BAA-1088 / PV-4)).